We begin with the raw amino-acid sequence, 364 residues long: Probable methyltransferase ICS2 (364 aa).

Positions 18, 61, 98, 99, 133, and 134 each coordinate S-adenosyl-L-homocysteine. Asn-172, Asp-258, Phe-260, and Asn-261 together coordinate Mg(2+).

This sequence belongs to the methyltransferase superfamily. Type-7 methyltransferase family. Requires Mg(2+) as cofactor.

No detectable N-methyltransferase activity. This chain is Probable methyltransferase ICS2, found in Camellia irrawadiensis (Burmese tea).